Here is a 96-residue protein sequence, read N- to C-terminus: Prokineticin Bm8-a (96 aa).

An N-terminal signal peptide occupies residues 1 to 19 (MKCFAQIVVLLLVIAFSHG). Disulfide bonds link Cys26/Cys38, Cys32/Cys50, Cys37/Cys78, Cys60/Cys86, and Cys80/Cys95.

The protein belongs to the AVIT (prokineticin) family. As to expression, expressed by the skin glands.

It is found in the secreted. Its function is as follows. Potent agonist for both PKR1/PROKR1 and PKR2/PROKR2, and inducer of a potent and long-lasting hyperalgesia. Also potentiates capsaicin-induced TRPV1 current, when tested on DRG neurons. At subnanomolar concentrations, this protein both induces potent chemotaxis of macrophages and stimulates LPS-induced production of the pro-inflammatory cytokines IL-1 and IL-12. In vivo, potently stimulates the contraction of the guinea-pig gastrointestinal (GI) smooth muscle (nanomolar concentration). In Bombina maxima (Giant fire-bellied toad), this protein is Prokineticin Bm8-a.